The primary structure comprises 468 residues: Ribulose bisphosphate carboxylase large chain (468 aa).

N6,N6,N6-trimethyllysine is present on Lys-5. The substrate site is built by Asn-114 and Thr-164. Lys-166 (proton acceptor) is an active-site residue. Lys-168 contacts substrate. Residues Lys-192, Asp-194, and Glu-195 each contribute to the Mg(2+) site. Residue Lys-192 is modified to N6-carboxylysine. The active-site Proton acceptor is the His-285. Substrate contacts are provided by Arg-286, His-318, and Ser-370.

It belongs to the RuBisCO large chain family. Type I subfamily. In terms of assembly, heterohexadecamer of 8 large chains and 8 small chains; disulfide-linked. The disulfide link is formed within the large subunit homodimers. It depends on Mg(2+) as a cofactor. In terms of processing, the disulfide bond which can form in the large chain dimeric partners within the hexadecamer appears to be associated with oxidative stress and protein turnover.

It localises to the plastid. The protein resides in the chloroplast. It catalyses the reaction 2 (2R)-3-phosphoglycerate + 2 H(+) = D-ribulose 1,5-bisphosphate + CO2 + H2O. The catalysed reaction is D-ribulose 1,5-bisphosphate + O2 = 2-phosphoglycolate + (2R)-3-phosphoglycerate + 2 H(+). In terms of biological role, ruBisCO catalyzes two reactions: the carboxylation of D-ribulose 1,5-bisphosphate, the primary event in carbon dioxide fixation, as well as the oxidative fragmentation of the pentose substrate in the photorespiration process. Both reactions occur simultaneously and in competition at the same active site. In Nolana spathulata (Chilean bell flower), this protein is Ribulose bisphosphate carboxylase large chain.